Consider the following 134-residue polypeptide: Protein Turandot E (134 aa).

The signal sequence occupies residues 1–38 (MSYTRTVHSSTSILKMNSALQISCLLVVLGCLLGSGHC).

The protein belongs to the Turandot family.

The protein resides in the secreted. In terms of biological role, a humoral factor that may play a role in stress tolerance. This chain is Protein Turandot E, found in Drosophila simulans (Fruit fly).